The primary structure comprises 235 residues: Carbonic anhydrase 1 (235 aa).

An Alpha-carbonic anhydrase domain is found at 1-235 (GNKQSPVDIK…LKGRTVKASF (235 aa)). His-40 serves as the catalytic Proton donor/acceptor. The Zn(2+) site is built by His-69, His-71, and His-94. Residues Thr-174 and 174–175 (TH) each bind substrate.

Belongs to the alpha-carbonic anhydrase family. Zn(2+) serves as cofactor.

Its subcellular location is the cytoplasm. The catalysed reaction is hydrogencarbonate + H(+) = CO2 + H2O. The enzyme catalyses urea = cyanamide + H2O. Inhibited by acetazolamide. Catalyzes the reversible hydration of carbon dioxide. Can hydrate cyanamide to urea. In Oryctolagus cuniculus (Rabbit), this protein is Carbonic anhydrase 1 (CA1).